We begin with the raw amino-acid sequence, 88 residues long: MSSFDKTMKFNFSDDSAETNVNEVLITVYDALQEKGYNPINQIVGYLLSGDPAYIPRHQDARNLIRKLERDELIEELVKSYLETHKEA.

This sequence belongs to the UPF0297 family.

The chain is UPF0297 protein BPUM_2379 from Bacillus pumilus (strain SAFR-032).